The primary structure comprises 129 residues: Replication initiation control protein YabA (129 aa).

Residues His-103, Cys-105, Cys-119, and Cys-122 each coordinate Zn(2+).

It belongs to the YabA family. Homotetramer. Interacts with both DnaA and DnaN, acting as a bridge between these two proteins. Requires Zn(2+) as cofactor.

It localises to the cytoplasm. Its subcellular location is the nucleoid. In terms of biological role, involved in control of chromosome replication initiation. Inhibits the cooperative binding of DnaA to the oriC region, thus negatively regulating initiation of chromosome replication. Inhibits the ability of DnaA-ATP to form a helix on DNA; does not disassemble preformed DnaA-DNA helices. Decreases the residence time of DnaA on the chromosome at its binding sites (oriC, replication forks and promoter-binding sites). Tethers DnaA to the replication machinery via the DNA polymerase beta sliding clamp subunit (dnaN). Associates with oriC and other DnaA targets on the chromosome in a DnaA-dependent manner. The sequence is that of Replication initiation control protein YabA from Listeria monocytogenes serotype 4b (strain CLIP80459).